We begin with the raw amino-acid sequence, 449 residues long: N-succinylarginine dihydrolase (449 aa).

Residues 19-28 (GGLSYGNVAS), Asn-110, and 137-138 (HR) each bind substrate. Positions 23 to 43 (YGNVASQSNSQQGSNPREAAR) are disordered. Residues 25–37 (NVASQSNSQQGSN) show a composition bias toward polar residues. Glu-174 is a catalytic residue. Arg-214 lines the substrate pocket. The active site involves His-250. The substrate site is built by Asp-252 and Asn-365. The Nucleophile role is filled by Cys-371.

It belongs to the succinylarginine dihydrolase family. In terms of assembly, homodimer.

The enzyme catalyses N(2)-succinyl-L-arginine + 2 H2O + 2 H(+) = N(2)-succinyl-L-ornithine + 2 NH4(+) + CO2. Its pathway is amino-acid degradation; L-arginine degradation via AST pathway; L-glutamate and succinate from L-arginine: step 2/5. In terms of biological role, catalyzes the hydrolysis of N(2)-succinylarginine into N(2)-succinylornithine, ammonia and CO(2). The chain is N-succinylarginine dihydrolase from Pseudomonas putida (strain GB-1).